A 356-amino-acid polypeptide reads, in one-letter code: Dual-specificity RNA methyltransferase RlmN (356 aa).

Residue E89 is the Proton acceptor of the active site. The region spanning S108 to D341 is the Radical SAM core domain. Cysteines 115 and 346 form a disulfide. Positions 122, 126, and 129 each coordinate [4Fe-4S] cluster. S-adenosyl-L-methionine contacts are provided by residues G172 to E173, S204, S227 to H229, and N303. C346 serves as the catalytic S-methylcysteine intermediate.

This sequence belongs to the radical SAM superfamily. RlmN family. [4Fe-4S] cluster serves as cofactor.

Its subcellular location is the cytoplasm. It catalyses the reaction adenosine(2503) in 23S rRNA + 2 reduced [2Fe-2S]-[ferredoxin] + 2 S-adenosyl-L-methionine = 2-methyladenosine(2503) in 23S rRNA + 5'-deoxyadenosine + L-methionine + 2 oxidized [2Fe-2S]-[ferredoxin] + S-adenosyl-L-homocysteine. The enzyme catalyses adenosine(37) in tRNA + 2 reduced [2Fe-2S]-[ferredoxin] + 2 S-adenosyl-L-methionine = 2-methyladenosine(37) in tRNA + 5'-deoxyadenosine + L-methionine + 2 oxidized [2Fe-2S]-[ferredoxin] + S-adenosyl-L-homocysteine. Specifically methylates position 2 of adenine 2503 in 23S rRNA and position 2 of adenine 37 in tRNAs. m2A2503 modification seems to play a crucial role in the proofreading step occurring at the peptidyl transferase center and thus would serve to optimize ribosomal fidelity. The sequence is that of Dual-specificity RNA methyltransferase RlmN from Campylobacter jejuni (strain RM1221).